The primary structure comprises 137 residues: Large ribosomal subunit protein uL16 (137 aa).

Residues 1-17 (MLQPKRTKFRKQQKGRN) show a composition bias toward basic residues. The tract at residues 1–24 (MLQPKRTKFRKQQKGRNRGLAQSG) is disordered.

Belongs to the universal ribosomal protein uL16 family. As to quaternary structure, part of the 50S ribosomal subunit.

Functionally, binds 23S rRNA and is also seen to make contacts with the A and possibly P site tRNAs. This Dichelobacter nodosus (strain VCS1703A) protein is Large ribosomal subunit protein uL16.